Consider the following 372-residue polypeptide: Protein zntB (372 aa).

Transmembrane regions (helical) follow at residues 15–35 (LIMCFLSGLSTAIGGLYVIFI), 42–62 (LLGHLLSFSSGVMIYISFMDL), and 70–90 (IGFYNANIWFFVGIIFFAVIL). A disordered region spans residues 99-166 (ESGDSNHAHS…IAKSKNKKKS (68 aa)). The segment covering 114–124 (IEKHSSEKKEV) has biased composition (basic and acidic residues). Positions 133–167 (NGKDKKQKQQKQKQQKQQQQQKQNIAKSKNKKKSK) form a coiled coil. Residues 137–146 (KKQKQQKQKQ) are compositionally biased toward basic residues. A compositionally biased stretch (low complexity) spans 147–159 (QKQQQQQKQNIAK). A run of 5 helical transmembrane segments spans residues 170–192 (YLNSVGIATAIGVSLHNFPEGVA), 207–229 (LMLAIAAHNIPEGMAVAAPIFSA), 237–257 (FKYCLYSGLCEPVGAIIFGLI), 271–291 (LAAVAGIMVFMVIKELLPAAF), and 301–321 (FSNIIGMIFFFFSIHFLHSML). The segment at 328-372 (AGDGGHGHSHGGHGHSHGHGHSHGGHSHDSQHVESPQSSSFNAFA) is disordered. Positions 334–352 (GHSHGGHGHSHGHGHSHGG) are enriched in basic residues. Residues 360-372 (VESPQSSSFNAFA) are compositionally biased toward polar residues.

Belongs to the ZIP transporter (TC 2.A.5) family. ZupT subfamily.

The protein localises to the membrane. Functionally, may transport divalent cations. May participate, with dstA, in the regulation of the differentiation of stalk cells during development. In Dictyostelium discoideum (Social amoeba), this protein is Protein zntB (zntB).